The primary structure comprises 468 residues: 6-phosphogluconate dehydrogenase, decarboxylating (468 aa).

Residues 10–15 (GMAVMG), 33–35 (NRT), 74–76 (VQS), and asparagine 102 contribute to the NADP(+) site. Substrate-binding positions include asparagine 102 and 128-130 (SGG). Lysine 182 acts as the Proton acceptor in catalysis. 185-186 (HN) provides a ligand contact to substrate. The active-site Proton donor is the glutamate 189. The substrate site is built by tyrosine 190, lysine 259, arginine 286, arginine 445, and histidine 451.

The protein belongs to the 6-phosphogluconate dehydrogenase family. Homodimer.

It carries out the reaction 6-phospho-D-gluconate + NADP(+) = D-ribulose 5-phosphate + CO2 + NADPH. The protein operates within carbohydrate degradation; pentose phosphate pathway; D-ribulose 5-phosphate from D-glucose 6-phosphate (oxidative stage): step 3/3. Its function is as follows. Catalyzes the oxidative decarboxylation of 6-phosphogluconate to ribulose 5-phosphate and CO(2), with concomitant reduction of NADP to NADPH. The sequence is that of 6-phosphogluconate dehydrogenase, decarboxylating (gnd) from Buchnera aphidicola subsp. Acyrthosiphon pisum (strain APS) (Acyrthosiphon pisum symbiotic bacterium).